We begin with the raw amino-acid sequence, 280 residues long: Pantothenate synthetase (280 aa).

Position 31 to 38 (31 to 38 (MGNLHAGH)) interacts with ATP. Catalysis depends on H38, which acts as the Proton donor. Q62 contacts (R)-pantoate. Q62 is a beta-alanine binding site. 150 to 153 (GKKD) serves as a coordination point for ATP. (R)-pantoate is bound at residue Q156. Residues V179 and 187-190 (MSSR) contribute to the ATP site.

It belongs to the pantothenate synthetase family. As to quaternary structure, homodimer.

The protein localises to the cytoplasm. The enzyme catalyses (R)-pantoate + beta-alanine + ATP = (R)-pantothenate + AMP + diphosphate + H(+). The protein operates within cofactor biosynthesis; (R)-pantothenate biosynthesis; (R)-pantothenate from (R)-pantoate and beta-alanine: step 1/1. Functionally, catalyzes the condensation of pantoate with beta-alanine in an ATP-dependent reaction via a pantoyl-adenylate intermediate. The protein is Pantothenate synthetase of Xanthomonas axonopodis pv. citri (strain 306).